We begin with the raw amino-acid sequence, 130 residues long: Fluoride-specific ion channel FluC (130 aa).

Helical transmembrane passes span 2–22 (GLLL…RFAL), 36–56 (GILL…AFLI), 71–91 (FLLV…SLDI), and 100–120 (IFIA…AVIL). Residues glycine 79 and threonine 82 each coordinate Na(+).

Belongs to the fluoride channel Fluc/FEX (TC 1.A.43) family.

The protein resides in the cell inner membrane. The enzyme catalyses fluoride(in) = fluoride(out). Na(+) is not transported, but it plays an essential structural role and its presence is essential for fluoride channel function. In terms of biological role, fluoride-specific ion channel. Important for reducing fluoride concentration in the cell, thus reducing its toxicity. This is Fluoride-specific ion channel FluC from Francisella tularensis subsp. mediasiatica (strain FSC147).